A 127-amino-acid polypeptide reads, in one-letter code: Probable tautomerase YusQ (127 aa).

Pro2 acts as the Proton acceptor; via imino nitrogen in catalysis.

The protein belongs to the 4-oxalocrotonate tautomerase family.

The chain is Probable tautomerase YusQ (yusQ) from Bacillus subtilis (strain 168).